The chain runs to 198 residues: Nuclear transcription factor Y subunit A-4 (198 aa).

Residues 1-47 (MTSSVHELSDNNESHAKKERPDSQTRPQVPSGRSSESIDTNSVYSEP) are disordered. Residues 7–23 (ELSDNNESHAKKERPDS) show a composition bias toward basic and acidic residues. The span at 24–44 (QTRPQVPSGRSSESIDTNSVY) shows a compositional bias: polar residues. A Subunit association domain (SAD) motif is present at residues 101-124 (FVNAKQYHGILRRRQSRAKLEARN). A DNA-binding region (NFYA/HAP2-type) is located at residues 131-156 (KPYMHESRHLHAIRRPRGCGGRFLNA). A disordered region spans residues 136 to 198 (ESRHLHAIRR…MATSGPNGRS (63 aa)). Residues 156-166 (AKKENGDHKEE) show a composition bias toward basic and acidic residues.

This sequence belongs to the NFYA/HAP2 subunit family. As to quaternary structure, heterotrimeric transcription factor composed of three components, NF-YA, NF-YB and NF-YC. NF-YB and NF-YC must interact and dimerize for NF-YA association and DNA binding. As to expression, expressed in stems, caulines, and senescent flowers.

It localises to the nucleus. In terms of biological role, stimulates the transcription of various genes by recognizing and binding to a CCAAT motif in promoters. This chain is Nuclear transcription factor Y subunit A-4 (NFYA4), found in Arabidopsis thaliana (Mouse-ear cress).